The following is an 847-amino-acid chain: Glucans biosynthesis glucosyltransferase H (847 aa).

The Cytoplasmic portion of the chain corresponds to 1-138; the sequence is MNKTTEYIDA…KWRTVGTIRR (138 aa). A helical membrane pass occupies residues 139-156; sequence YILLILTLAQTVVATWYM. Residues 157–193 are Periplasmic-facing; it reads KTILPYQGWALINPMDMVGQDVWVSFMQLLPYMLQTG. Residues 194-216 form a helical membrane-spanning segment; that stretch reads ILILFAVLFCWVSAGFWTALMGF. At 217–511 the chain is on the cytoplasmic side; that stretch reads LQLLIGRDKY…LVKGMHPVHR (295 aa). Residues 512–534 traverse the membrane as a helical segment; it reads AVFLTGVMSYLSAPLWFMFLALS. The Periplasmic portion of the chain corresponds to 535–567; sequence TALQVVHALTEPQYFLQPRQLFPVWPQWRPELA. The chain crosses the membrane as a helical span at residues 568-590; that stretch reads IALFASTMVLLFLPKLLSILLIW. At 591 to 602 the chain is on the cytoplasmic side; sequence CKGTKEYGGFWR. A helical membrane pass occupies residues 603-625; that stretch reads VTLSLLLEVLFSVLLAPVRMLFH. Residues 626 to 679 are Periplasmic-facing; sequence TVFVVSAFLGWEVVWNSPQRDDDSTSWGEAFKRHGSQLLLGLVWAVGMAWLDLR. Residues 680–702 traverse the membrane as a helical segment; it reads FLFWLAPIVFSLILSPFVSVISS. At 703–847 the chain is on the cytoplasmic side; it reads RATVGLRTKR…ALRKPDAASQ (145 aa).

The protein belongs to the glycosyltransferase 2 family. OpgH subfamily.

The protein resides in the cell inner membrane. Its pathway is glycan metabolism; osmoregulated periplasmic glucan (OPG) biosynthesis. Its function is as follows. Involved in the biosynthesis of osmoregulated periplasmic glucans (OPGs). The protein is Glucans biosynthesis glucosyltransferase H of Escherichia coli O6:H1 (strain CFT073 / ATCC 700928 / UPEC).